The following is a 361-amino-acid chain: Probable dual-specificity RNA methyltransferase RlmN (361 aa).

Glutamate 91 functions as the Proton acceptor in the catalytic mechanism. Positions 97 to 335 (QHYGLSVCVT…CVVRQEHGTD (239 aa)) constitute a Radical SAM core domain. The cysteines at positions 104 and 340 are disulfide-linked. Residues cysteine 111, cysteine 115, and cysteine 118 each contribute to the [4Fe-4S] cluster site. S-adenosyl-L-methionine is bound by residues 163 to 164 (GE), serine 195, 218 to 220 (SLH), and asparagine 296. The active-site S-methylcysteine intermediate is cysteine 340.

Belongs to the radical SAM superfamily. RlmN family. [4Fe-4S] cluster serves as cofactor.

It localises to the cytoplasm. The enzyme catalyses adenosine(2503) in 23S rRNA + 2 reduced [2Fe-2S]-[ferredoxin] + 2 S-adenosyl-L-methionine = 2-methyladenosine(2503) in 23S rRNA + 5'-deoxyadenosine + L-methionine + 2 oxidized [2Fe-2S]-[ferredoxin] + S-adenosyl-L-homocysteine. It catalyses the reaction adenosine(37) in tRNA + 2 reduced [2Fe-2S]-[ferredoxin] + 2 S-adenosyl-L-methionine = 2-methyladenosine(37) in tRNA + 5'-deoxyadenosine + L-methionine + 2 oxidized [2Fe-2S]-[ferredoxin] + S-adenosyl-L-homocysteine. Specifically methylates position 2 of adenine 2503 in 23S rRNA and position 2 of adenine 37 in tRNAs. This chain is Probable dual-specificity RNA methyltransferase RlmN, found in Streptococcus mutans serotype c (strain ATCC 700610 / UA159).